Reading from the N-terminus, the 678-residue chain is DNA ligase (678 aa).

Residues 32–36 (DSEYD), 81–82 (SL), and glutamate 113 contribute to the NAD(+) site. Lysine 115 functions as the N6-AMP-lysine intermediate in the catalytic mechanism. NAD(+) contacts are provided by arginine 136, glutamate 174, lysine 291, and lysine 315. Residues cysteine 409, cysteine 412, cysteine 427, and cysteine 433 each contribute to the Zn(2+) site. In terms of domain architecture, BRCT spans 596–678 (ASDNPFAGKT…MRLLGESSDA (83 aa)).

Belongs to the NAD-dependent DNA ligase family. LigA subfamily. Mg(2+) is required as a cofactor. It depends on Mn(2+) as a cofactor.

It catalyses the reaction NAD(+) + (deoxyribonucleotide)n-3'-hydroxyl + 5'-phospho-(deoxyribonucleotide)m = (deoxyribonucleotide)n+m + AMP + beta-nicotinamide D-nucleotide.. Its function is as follows. DNA ligase that catalyzes the formation of phosphodiester linkages between 5'-phosphoryl and 3'-hydroxyl groups in double-stranded DNA using NAD as a coenzyme and as the energy source for the reaction. It is essential for DNA replication and repair of damaged DNA. The polypeptide is DNA ligase (Sodalis glossinidius (strain morsitans)).